The sequence spans 432 residues: D-amino acid dehydrogenase (432 aa).

3 to 17 (VVILGSGVVGVASAW) contacts FAD.

It belongs to the DadA oxidoreductase family. It depends on FAD as a cofactor.

It carries out the reaction a D-alpha-amino acid + A + H2O = a 2-oxocarboxylate + AH2 + NH4(+). Its pathway is amino-acid degradation; D-alanine degradation; NH(3) and pyruvate from D-alanine: step 1/1. Oxidative deamination of D-amino acids. This Klebsiella pneumoniae (strain 342) protein is D-amino acid dehydrogenase.